The primary structure comprises 567 residues: Urease subunit alpha (567 aa).

Residues Gly129–Phe567 form the Urease domain. The Ni(2+) site is built by His134, His136, and Lys217. Lys217 bears the N6-carboxylysine mark. His219 contacts substrate. Residues His246 and His272 each contribute to the Ni(2+) site. His320 acts as the Proton donor in catalysis. Asp360 contributes to the Ni(2+) binding site.

It belongs to the metallo-dependent hydrolases superfamily. Urease alpha subunit family. Heterotrimer of UreA (gamma), UreB (beta) and UreC (alpha) subunits. Three heterotrimers associate to form the active enzyme. Ni cation serves as cofactor. Carboxylation allows a single lysine to coordinate two nickel ions.

It localises to the cytoplasm. The catalysed reaction is urea + 2 H2O + H(+) = hydrogencarbonate + 2 NH4(+). Its pathway is nitrogen metabolism; urea degradation; CO(2) and NH(3) from urea (urease route): step 1/1. In Klebsiella pneumoniae (strain 342), this protein is Urease subunit alpha.